We begin with the raw amino-acid sequence, 252 residues long: ATP synthase subunit a (252 aa).

6 consecutive transmembrane segments (helical) span residues 29–49, 87–107, 117–137, 146–166, 188–208, and 211–231; these read FTNSALFMVATVVVAAAFLFL, FFPLVFSLFMFVLVANLLGLF, IIVTFGLAILVIGTVIVYGFM, LFVPKGVPLVMMVLVVPIEVI, ITLKVFSGFVVSLSALGAVGV, and SILPLAMAVALTALELLVAFL.

Belongs to the ATPase A chain family. In terms of assembly, F-type ATPases have 2 components, CF(1) - the catalytic core - and CF(0) - the membrane proton channel. CF(1) has five subunits: alpha(3), beta(3), gamma(1), delta(1), epsilon(1). CF(0) has three main subunits: a(1), b(2) and c(9-12). The alpha and beta chains form an alternating ring which encloses part of the gamma chain. CF(1) is attached to CF(0) by a central stalk formed by the gamma and epsilon chains, while a peripheral stalk is formed by the delta and b chains.

The protein resides in the cell inner membrane. Key component of the proton channel; it plays a direct role in the translocation of protons across the membrane. The polypeptide is ATP synthase subunit a (Mesorhizobium japonicum (strain LMG 29417 / CECT 9101 / MAFF 303099) (Mesorhizobium loti (strain MAFF 303099))).